Here is a 303-residue protein sequence, read N- to C-terminus: Porphobilinogen deaminase (303 aa).

At C235 the chain carries S-(dipyrrolylmethanemethyl)cysteine.

The protein belongs to the HMBS family. As to quaternary structure, monomer. The cofactor is dipyrromethane.

It carries out the reaction 4 porphobilinogen + H2O = hydroxymethylbilane + 4 NH4(+). The protein operates within porphyrin-containing compound metabolism; protoporphyrin-IX biosynthesis; coproporphyrinogen-III from 5-aminolevulinate: step 2/4. Functionally, tetrapolymerization of the monopyrrole PBG into the hydroxymethylbilane pre-uroporphyrinogen in several discrete steps. The protein is Porphobilinogen deaminase of Campylobacter fetus subsp. fetus (strain 82-40).